Consider the following 721-residue polypeptide: mRNA (2'-O-methyladenosine-N(6)-)-methyltransferase (721 aa).

Composition is skewed to polar residues over residues 1-10 (MTSENHTTIK) and 19-36 (PTGS…TSKP). The segment at 1–37 (MTSENHTTIKADSALVMSPTGSTSQAAPFSPSTSKPI) is disordered. A WW domain is found at 43–77 (ELIQAGWSKCWSKRENRPYYFNRFTNQSLWEMPVL). The disordered stretch occupies residues 93-170 (PASGEANADA…KQGQASTPAP (78 aa)). Residues 132-148 (IPATPTTPTVPISPSTP) show a composition bias toward low complexity. The substrate site is built by R239 and R269. 558–561 (NPPF) is a binding site for S-adenosyl-L-methionine. Substrate is bound by residues E563 and 593 to 597 (WRDPP). 619–621 (FEH) provides a ligand contact to S-adenosyl-L-methionine. The span at 675-686 (SGRSLPSPGPSS) shows a compositional bias: low complexity. The interval 675–721 (SGRSLPSPGPSSTNTGEKDSKPAPERTAPSQDNSSPVDKTAQDTTNT) is disordered. The span at 702–721 (APSQDNSSPVDKTAQDTTNT) shows a compositional bias: polar residues.

Belongs to the CAPAM family.

Its subcellular location is the nucleus. It carries out the reaction a 5'-end (N(7)-methyl 5'-triphosphoguanosine)-(2'-O-methyladenosine) in mRNA + S-adenosyl-L-methionine = a 5'-end (N(7)-methyl 5'-triphosphoguanosine)-(N(6),2'-O-dimethyladenosine) in mRNA + S-adenosyl-L-homocysteine + H(+). Cap-specific adenosine methyltransferase activity is inhibited by zinc. In terms of biological role, cap-specific adenosine methyltransferase that catalyzes formation of N(6),2'-O-dimethyladenosine cap (m6A(m)) by methylating the adenosine at the second transcribed position of capped mRNAs. This chain is mRNA (2'-O-methyladenosine-N(6)-)-methyltransferase (pcif1), found in Danio rerio (Zebrafish).